A 97-amino-acid polypeptide reads, in one-letter code: Large ribosomal subunit protein eL37 (97 aa).

Residue lysine 10 is modified to N6-acetyllysine. Zn(2+)-binding residues include cysteine 19, cysteine 22, cysteine 34, and cysteine 37. The C4-type zinc-finger motif lies at 19 to 37 (CRRCGSKAYHLQKSTCGKC). Residues serine 96 and serine 97 each carry the phosphoserine modification.

The protein belongs to the eukaryotic ribosomal protein eL37 family. As to quaternary structure, component of the large ribosomal subunit.

The protein localises to the cytoplasm. Component of the large ribosomal subunit. The ribosome is a large ribonucleoprotein complex responsible for the synthesis of proteins in the cell. The chain is Large ribosomal subunit protein eL37 (RPL37) from Bos taurus (Bovine).